A 141-amino-acid chain; its full sequence is MAKKVVTVIKLALPAGKANPAPPVGPALGQHGVNIMAFCKEYNAKTSDQAGMIIPVEISVYEDRSFTFILKTPPASVLIRKAAGVEKGSAQPNKQKAGSISRAQLQEIAQTKMPDLNANDIEAAMNIVAGTARNMGITVTD.

The protein belongs to the universal ribosomal protein uL11 family. As to quaternary structure, part of the ribosomal stalk of the 50S ribosomal subunit. Interacts with L10 and the large rRNA to form the base of the stalk. L10 forms an elongated spine to which L12 dimers bind in a sequential fashion forming a multimeric L10(L12)X complex. In terms of processing, one or more lysine residues are methylated.

Its function is as follows. Forms part of the ribosomal stalk which helps the ribosome interact with GTP-bound translation factors. The polypeptide is Large ribosomal subunit protein uL11 (Picosynechococcus sp. (strain ATCC 27264 / PCC 7002 / PR-6) (Agmenellum quadruplicatum)).